The sequence spans 396 residues: GDSL esterase/lipase ACHE (396 aa).

A signal peptide spans 1 to 31 (MATAATATAGSRAAVLLLLSLALALALRPSD). Residue Ser-49 is the Nucleophile of the active site. N-linked (GlcNAc...) asparagine glycans are attached at residues Asn-108, Asn-126, Asn-151, Asn-196, and Asn-339. Catalysis depends on residues Asp-359 and His-362.

This sequence belongs to the 'GDSL' lipolytic enzyme family.

It is found in the secreted. In terms of biological role, esterase that can hydrolyze acetylthiocholine and propionylthiocholine in vitro. Substrate preference is propionylthiocholine &gt; acetylthiocholine. Possesses extremely low activity against butyrylthiocholine. The polypeptide is GDSL esterase/lipase ACHE (Zea mays (Maize)).